The chain runs to 811 residues: MPSYQYLLSLLFYILDCTDRFSVIVTIHNHRVGVLMIVLLQDQWKSYCRTISLLAFQSFGVVYGDLSTSPLYVYKSAFSGRLNNYRDETTIFGLFSLIFWTLTLLPLLKYVIIVLNADDNGEGGTFALYSLLCRHAKFSLLPNQQSADEELSTYYQPGVGGIISSPLKRFLEKHRKLRTCLLLFVLFGACMVIGDGVFTPAISVLSAISGLKDPGPGGIPDGWVVFIACIVLVGLFALQHRGTHRVAFMFAPIVVVWLLSIGVIGLYNIIHWNHRIFLALSPHYVIKFFKMTGKDGWLSLGGVLLAITGTEAMFADLGHFTAASIRLAFVGAIYPCLVLQYMGQAAFLSRNMSAVEDSFYQSVPRSLFWPVFVIATLAAVVGSQSIISATFSIVKQCLSLGCFPRVKVVHTSRWIHGQIYIPEINWILMVLCLAVTLGFRDTTVIGNAYGLACIVVMFVTTWLMALVIIFVWQKNILLALLFVVAFGSIEVVYLSAAVTKVPQGGWAPIVFAFVFMLVMYVWHYGSRRKYLFDLQNKVSMKWILTLGPSLGIVRVPGIGLIYTELVTGVPSIFSHFVTNLPAFHQVLVFVCVKSVPVPFVPEDERYLIGRIGPREYRMYRCIVRYGYKDVQKDDENFENHLVMSIAKFIQMEAEEAASSGSYESSEGRMAVIHTEDTTGTGLVMRDSNNEASGTSLTRSSRSETLRSLQSIYEQESGSLSRRRRVRFEIAEEERIDPQVRDELADLLDAKEAGVTYIIGHSYVKARKNSNFLKTFAIDYAYSFLRKNCRGPAVALHIPHISLVEVGMIYYV.

At 1–52 (MPSYQYLLSLLFYILDCTDRFSVIVTIHNHRVGVLMIVLLQDQWKSYCRTIS) the chain is on the cytoplasmic side. Residues 53-73 (LLAFQSFGVVYGDLSTSPLYV) form a helical membrane-spanning segment. The Extracellular segment spans residues 74–93 (YKSAFSGRLNNYRDETTIFG). A helical membrane pass occupies residues 94 to 114 (LFSLIFWTLTLLPLLKYVIIV). Over 115-181 (LNADDNGEGG…EKHRKLRTCL (67 aa)) the chain is Cytoplasmic. A helical membrane pass occupies residues 182-202 (LLFVLFGACMVIGDGVFTPAI). Topologically, residues 203-217 (SVLSAISGLKDPGPG) are extracellular. A helical transmembrane segment spans residues 218-238 (GIPDGWVVFIACIVLVGLFAL). The Cytoplasmic segment spans residues 239-245 (QHRGTHR). Residues 246 to 266 (VAFMFAPIVVVWLLSIGVIGL) traverse the membrane as a helical segment. At 267–296 (YNIIHWNHRIFLALSPHYVIKFFKMTGKDG) the chain is on the extracellular side. Residues 297-317 (WLSLGGVLLAITGTEAMFADL) form a helical membrane-spanning segment. The Cytoplasmic portion of the chain corresponds to 318-326 (GHFTAASIR). The chain crosses the membrane as a helical span at residues 327-347 (LAFVGAIYPCLVLQYMGQAAF). Residues 348–366 (LSRNMSAVEDSFYQSVPRS) lie on the Extracellular side of the membrane. The N-linked (GlcNAc...) asparagine glycan is linked to asparagine 351. A helical transmembrane segment spans residues 367 to 387 (LFWPVFVIATLAAVVGSQSII). Residues 388 to 418 (SATFSIVKQCLSLGCFPRVKVVHTSRWIHGQ) lie on the Cytoplasmic side of the membrane. Residues 419 to 439 (IYIPEINWILMVLCLAVTLGF) form a helical membrane-spanning segment. Residues 440–450 (RDTTVIGNAYG) are Extracellular-facing. The chain crosses the membrane as a helical span at residues 451–471 (LACIVVMFVTTWLMALVIIFV). Residues 472–475 (WQKN) are Cytoplasmic-facing. The chain crosses the membrane as a helical span at residues 476–496 (ILLALLFVVAFGSIEVVYLSA). Over 497–503 (AVTKVPQ) the chain is Extracellular. The helical transmembrane segment at 504–524 (GGWAPIVFAFVFMLVMYVWHY) threads the bilayer. The Cytoplasmic segment spans residues 525-811 (GSRRKYLFDL…LVEVGMIYYV (287 aa)). Residues 680–702 (TGLVMRDSNNEASGTSLTRSSRS) form a disordered region.

This sequence belongs to the HAK/KUP transporter (TC 2.A.72.3) family. In terms of tissue distribution, expressed in roots and shoots.

The protein resides in the membrane. In terms of biological role, high-affinity potassium transporter. This is Potassium transporter 7 (HAK7) from Oryza sativa subsp. japonica (Rice).